The primary structure comprises 223 residues: MTSEVIEDEKQFYSKAKTYWKQIPPTVDGMLGGYGHISNIDLNSSRKFLQRFLREGPNKTGTSCALDCGAGIGRITKRLLLPLFRVVDMVDVTEDFLAKAKTYLGEEGKRVRNYFCCGLQDFSPEPGSYDVIWIQWVIGHLTDQHLAEFLRRCKRGLRPNGIIVIKDNMAQEGVILDDVDSSVCRDLEVVRRIIRTAGLSLLAEERQENLPDEIYHVYSFALR.

Residue Met-1 is modified to N-acetylmethionine. Thr-2 carries the N-acetylthreonine; in N-terminal Xaa-Pro-Lys N-methyltransferase 1, N-terminally processed modification. Residues Gly-69, Arg-74, 91 to 93, 119 to 120, and Gln-135 each bind S-adenosyl-L-methionine; these read DVT and LQ.

The protein belongs to the methyltransferase superfamily. NTM1 family.

It is found in the nucleus. The catalysed reaction is N-terminal L-alanyl-L-prolyl-L-lysyl-[protein] + 3 S-adenosyl-L-methionine = N-terminal N,N,N-trimethyl-L-alanyl-L-prolyl-L-lysyl-[protein] + 3 S-adenosyl-L-homocysteine + 3 H(+). The enzyme catalyses N-terminal L-seryl-L-prolyl-L-lysyl-[protein] + 3 S-adenosyl-L-methionine = N-terminal N,N,N-trimethyl-L-seryl-L-prolyl-L-lysyl-[protein] + 3 S-adenosyl-L-homocysteine + 3 H(+). It carries out the reaction N-terminal L-prolyl-L-prolyl-L-lysyl-[protein] + 2 S-adenosyl-L-methionine = N-terminal N,N-dimethyl-L-prolyl-L-prolyl-L-lysyl-[protein] + 2 S-adenosyl-L-homocysteine + 2 H(+). Distributive alpha-N-methyltransferase that methylates the N-terminus of target proteins containing the N-terminal motif [Ala/Gly/Pro/Ser]-Pro-Lys when the initiator Met is cleaved. Specifically catalyzes mono-, di- or tri-methylation of the exposed alpha-amino group of the Ala, Gly or Ser residue in the [Ala/Gly/Ser]-Pro-Lys motif and mono- or di-methylation of Pro in the Pro-Pro-Lys motif. Some of the substrates may be primed by NTMT2-mediated monomethylation. Catalyzes the trimethylation of the N-terminal Gly in CENPA (after removal of Met-1). Responsible for the N-terminal methylation of KLHL31, MYL2, MYL3, RB1, RCC1, RPL23A and SET. Required during mitosis for normal bipolar spindle formation and chromosome segregation via its action on RCC1. The sequence is that of N-terminal Xaa-Pro-Lys N-methyltransferase 1 (Ntmt1) from Mus musculus (Mouse).